The following is a 526-amino-acid chain: MELTLWTYEGPPHVGAMRVASSMKDIHYVLHAPQGDTYADLLFTMIERRGQRPPVTYTTFQARDLGGDTAELVKRNITEAVERFKPKTLLVGESCTAELIQDQPGALAKGMGFDIPIVNLELPAYSKKENWGASETFYQIIRTLLKDKANEIDKINPQRWKSLGRRPKVNILGPTLLGFRCRDDVIEIQRILSEQGIDTNVVAPLGSSPDDITRLTDADINICLYHEIAETSCEWLKRNCGMEYTTTIPIGIKNTINFINEVHEKLDLPLTNQKELEHKSKLPWYSKSVDSNYLTGKRVFVFGDGTHAIAAAKIAKDELGFEVVGLGTYSREMARQVRAAAKELNIEALITNSYLEVEDAMKKASPELVLGTQMERHSAKRLGIPCSVISTPMHVQDVPARYSPQMGWEGANVIFDDWVHPLMMGLEEHLIDMFKHDFEFVDGHQSHLGHTATKGLDNKVDEHAQSNINVQKKGNIIWTDSGRAELTKVPFFVRGKVKSNTEKYALSKGLPEINDETLYDAKAYFG.

A [4Fe-4S] cluster-binding site is contributed by aspartate 36. Residue aspartate 290 is the Proton donor of the active site. Residue 425–426 participates in substrate binding; that stretch reads GL.

The protein belongs to the ChlB/BchB/BchZ family. In terms of assembly, protochlorophyllide reductase is composed of three subunits; ChlL, ChlN and ChlB. Forms a heterotetramer of two ChlB and two ChlN subunits. Requires [4Fe-4S] cluster as cofactor.

The enzyme catalyses chlorophyllide a + oxidized 2[4Fe-4S]-[ferredoxin] + 2 ADP + 2 phosphate = protochlorophyllide a + reduced 2[4Fe-4S]-[ferredoxin] + 2 ATP + 2 H2O. It functions in the pathway porphyrin-containing compound metabolism; chlorophyll biosynthesis (light-independent). In terms of biological role, component of the dark-operative protochlorophyllide reductase (DPOR) that uses Mg-ATP and reduced ferredoxin to reduce ring D of protochlorophyllide (Pchlide) to form chlorophyllide a (Chlide). This reaction is light-independent. The NB-protein (ChlN-ChlB) is the catalytic component of the complex. In Prochlorococcus marinus subsp. pastoris (strain CCMP1986 / NIES-2087 / MED4), this protein is Light-independent protochlorophyllide reductase subunit B.